The sequence spans 283 residues: Bifunctional protein FolD (283 aa).

NADP(+) is bound by residues 157 to 159 and I224; that span reads GNG.

The protein belongs to the tetrahydrofolate dehydrogenase/cyclohydrolase family. As to quaternary structure, homodimer.

The enzyme catalyses (6R)-5,10-methylene-5,6,7,8-tetrahydrofolate + NADP(+) = (6R)-5,10-methenyltetrahydrofolate + NADPH. The catalysed reaction is (6R)-5,10-methenyltetrahydrofolate + H2O = (6R)-10-formyltetrahydrofolate + H(+). Its pathway is one-carbon metabolism; tetrahydrofolate interconversion. In terms of biological role, catalyzes the oxidation of 5,10-methylenetetrahydrofolate to 5,10-methenyltetrahydrofolate and then the hydrolysis of 5,10-methenyltetrahydrofolate to 10-formyltetrahydrofolate. This is Bifunctional protein FolD from Mycoplasmoides gallisepticum (strain R(low / passage 15 / clone 2)) (Mycoplasma gallisepticum).